The chain runs to 60 residues: Cytotoxin 10 (60 aa).

Disulfide bonds link cysteine 3–cysteine 21, cysteine 14–cysteine 38, cysteine 42–cysteine 53, and cysteine 54–cysteine 59.

The protein belongs to the three-finger toxin family. Short-chain subfamily. Type IA cytotoxin sub-subfamily. Monomer in solution; Homodimer and oligomer in the presence of negatively charged lipids forming a pore with a size ranging between 20 and 30 Angstroms. As to expression, expressed by the venom gland.

It is found in the secreted. Its subcellular location is the target cell membrane. Its function is as follows. Shows cytolytic activity on many different cells by forming pore in lipid membranes. In vivo, increases heart rate or kills the animal by cardiac arrest. In addition, it binds to heparin with high affinity, interacts with Kv channel-interacting protein 1 (KCNIP1) in a calcium-independent manner, and binds to integrin alpha-V/beta-3 (ITGAV/ITGB3) with moderate affinity. This chain is Cytotoxin 10, found in Naja annulifera (Banded Egyptian cobra).